A 165-amino-acid polypeptide reads, in one-letter code: MGPLPVCLPIMLLLLLPSLLLLLLLPGPGSGEASRILRVHRRGILELAGTVGCVGPRTPIAYMKYGCFCGLGGHGQPRDAIDWCCHGHDCCYTRAEEAGCSPKTERYSWQCVNQSVLCGPAENKCQELLCKCDQEIANCLAQTEYNLKYLFYPQFLCEPDSPKCD.

Residues methionine 1–glycine 31 form the signal peptide. A propeptide spanning residues glutamate 32–arginine 42 is cleaved from the precursor. 8 disulfides stabilise this stretch: cysteine 53–cysteine 111, cysteine 67–cysteine 157, cysteine 69–cysteine 85, cysteine 84–cysteine 139, cysteine 90–cysteine 164, cysteine 91–cysteine 132, cysteine 100–cysteine 125, and cysteine 118–cysteine 130. Ca(2+) is bound by residues phenylalanine 68, glycine 70, and glycine 72. The active site involves histidine 88. Aspartate 89 is a Ca(2+) binding site. An N-linked (GlcNAc...) asparagine glycan is attached at asparagine 113. Aspartate 133 is an active-site residue.

Belongs to the phospholipase A2 family. Interacts with PLA2R1; this interaction mediates PLA2G10 clearance and inactivation. It depends on Ca(2+) as a cofactor. In terms of tissue distribution, found in spleen, thymus, peripheral blood leukocytes, pancreas, lung, and colon. Expressed in neuronal fibers in dorsal root ganglia and in peripheral tissues including stomach, white adipose tissue and prostate (at protein level).

The protein resides in the secreted. It is found in the lysosome. The protein localises to the cytoplasmic vesicle. It localises to the secretory vesicle. Its subcellular location is the acrosome. The enzyme catalyses a 1,2-diacyl-sn-glycero-3-phosphocholine + H2O = a 1-acyl-sn-glycero-3-phosphocholine + a fatty acid + H(+). It carries out the reaction 1-hexadecanoyl-2-(9Z-octadecenoyl)-sn-glycero-3-phosphocholine + H2O = 1-hexadecanoyl-sn-glycero-3-phosphocholine + (9Z)-octadecenoate + H(+). The catalysed reaction is 1-octadecanoyl-2-(5Z,8Z,11Z,14Z-eicosatetraenoyl)-sn-glycero-3-phosphocholine + H2O = 1-octadecanoyl-sn-glycero-3-phosphocholine + (5Z,8Z,11Z,14Z)-eicosatetraenoate + H(+). It catalyses the reaction 1,2-dihexadecanoyl-sn-glycero-3-phosphocholine + H2O = 1-hexadecanoyl-sn-glycero-3-phosphocholine + hexadecanoate + H(+). The enzyme catalyses 1-hexadecanoyl-2-(9Z-octadecenoyl)-sn-glycero-3-phosphoglycerol + H2O = 1-hexadecanoyl-sn-glycero-3-phosphoglycerol + (9Z)-octadecenoate + H(+). It carries out the reaction 1,2-dihexadecanoyl-sn-glycero-3-phospho-(1'-sn-glycerol) + H2O = 1-hexadecanoyl-sn-glycero-3-phospho-(1'-sn-glycerol) + hexadecanoate + H(+). The catalysed reaction is 1-hexadecanoyl-2-(9Z-octadecenoyl)-sn-glycero-3-phospho-L-serine + H2O = 1-hexadecanoyl-sn-glycero-3-phospho-L-serine + (9Z)-octadecenoate + H(+). It catalyses the reaction 1-hexadecanoyl-2-(9Z,12Z-octadecadienoyl)-sn-glycero-3-phosphoethanolamine + H2O = 1-hexadecanoyl-sn-glycero-3-phosphoethanolamine + (9Z,12Z)-octadecadienoate + H(+). The enzyme catalyses 1-hexadecanoyl-2-(9Z-octadecenoyl)-sn-glycero-3-phosphate + H2O = 1-hexadecanoyl-sn-glycero-3-phosphate + (9Z)-octadecenoate + H(+). It carries out the reaction 1-O-hexadecyl-2-acetyl-sn-glycero-3-phosphocholine + H2O = 1-O-hexadecyl-sn-glycero-3-phosphocholine + acetate + H(+). Its activity is regulated as follows. Inhibited by methyl indoxam. Secretory calcium-dependent phospholipase A2 that primarily targets extracellular phospholipids. Hydrolyzes the ester bond of the fatty acyl group attached at sn-2 position of phospholipids with preference for phosphatidylcholines and phosphatidylglycerols over phosphatidylethanolamines. Preferentially releases sn-2 omega-6 and omega-3 polyunsaturated fatty acyl (PUFA) chains over saturated fatty acyls. Contributes to phospholipid remodeling of very low-density lipoprotein (VLDL), low-density lipoprotein (LDL) and high-density lipoprotein (HDL) particles. Hydrolyzes LDL phospholipids releasing unsaturated fatty acids that regulate macrophage differentiation toward foam cells. Efficiently hydrolyzes and inactivates platelet activating factor (PAF), a potent lipid mediator present in oxidized LDL. May act in an autocrine and paracrine manner. Secreted by lung epithelium, targets membrane phospholipids of infiltrating eosinophils, releasing arachidonate and boosting eicosanoid and cysteinyl leukotriene synthesis involved in airway inflammatory response. Secreted by gut epithelium, hydrolyzes dietary and biliary phosphatidylcholines in the gastrointestinal lumen. Plays a stem cell regulator role in colon epithelium. Within intracellular compartment, mediates Paneth-like cell differentiation and its stem cell supporting functions by inhibiting the Wnt signaling pathway in intestinal stem cell (ISC). Secreted in the intestinal lumen upon inflammation, acts in an autocrine way and promotes prostaglandin E2 synthesis that stimulates Wnt signaling pathway in ISCs and tissue regeneration. May participate in hair follicle morphogenesis by regulating phosphatidylethanolamines metabolism at the outermost epithelial layer and facilitating melanin synthesis. By releasing lysophosphatidylcholines (LPCs) at sperm acrosome, controls sperm cell capacitation, acrosome reaction and overall fertility. May promote neurite outgrowth in neuron fibers involved in nociception. Contributes to lipid remodeling of cellular membranes and generation of lipid mediators involved in pathogen clearance. Cleaves sn-2 fatty acyl chains of phosphatidylglycerols and phosphatidylethanolamines, which are major components of membrane phospholipids in bacteria. Displays bactericidal activity against Gram-positive bacteria by directly hydrolyzing phospholipids of the bacterial membrane. In pulmonary epithelium, may contribute to host defense response against adenoviral infection. Prevents adenovirus entry into host cells by hydrolyzing host cell plasma membrane, releasing C16:0 LPCs that inhibit virus-mediated membrane fusion and viral infection. Likely prevents adenoviral entry into the endosomes of host cells. May play a role in maturation and activation of innate immune cells including macrophages, group 2 innate lymphoid cells and mast cells. The polypeptide is Group 10 secretory phospholipase A2 (PLA2G10) (Homo sapiens (Human)).